The sequence spans 633 residues: MSEVLDDKPEVLVQKLDALPTDPGVYKFLDDEESVLYVGKAKNLRNRVRTYFQQSRQRDGRIEVMVQKAVDVDIIVTDTEAEALILENNQIKELQPRYNVNLRDDKTYPYICIKNERFPRVFKTRTVKQDGSEYFGPYADVSKMNSMMDAIRSVFQLRTCSLDLTEEKIEAGKYDVCLQHHIDNCKAPCVGKQSEADYMETIEQVKKLLNGQTQELMDLLKDEMQRQSDAHNFEEAARLRDQVKALKDYSQQQKVVSQDFADRDVFALHVERDEDIGCGVLFQVREGKMIGKRHKFLRSVEERSDAELILSLVENYYAEANFYPEEVLLSHDPNDHPAQDTHALEELLRQEQGHQVPIKVPQRGEKASLVRMATSNAKLQVGEWKTQQMKRERNRIPESIKALGEALNMEAPPRRVDGIDVSHHGGKETVASCVVFTDATPRKSDYRTYKIRSTEEGTPDDYKAMREVVRRRYRRMVEEDGPWPDLVVIDGGKGQLSSAVEMLKEVGAFDRFPVIGLAKRLEEVYRPGDSDPVFLAKDSPALQLLQKVRDEAHRFAVTYQRKRRKKKTLQSELLDIHGIGPKTAKKLLGEFGSAAKVKEADEEALAEVVGPAKAETITDYYDETEAPAPAETE.

Residues Thr21–Val100 form the GIY-YIG domain. In terms of domain architecture, UVR spans Gln214 to Tyr249.

Belongs to the UvrC family. Interacts with UvrB in an incision complex.

The protein localises to the cytoplasm. The UvrABC repair system catalyzes the recognition and processing of DNA lesions. UvrC both incises the 5' and 3' sides of the lesion. The N-terminal half is responsible for the 3' incision and the C-terminal half is responsible for the 5' incision. The polypeptide is UvrABC system protein C (Salinibacter ruber (strain DSM 13855 / M31)).